We begin with the raw amino-acid sequence, 294 residues long: Ribosomal protein L11 methyltransferase (294 aa).

S-adenosyl-L-methionine-binding residues include Thr-147, Gly-169, Asp-191, and Asn-231.

This sequence belongs to the methyltransferase superfamily. PrmA family.

The protein localises to the cytoplasm. The enzyme catalyses L-lysyl-[protein] + 3 S-adenosyl-L-methionine = N(6),N(6),N(6)-trimethyl-L-lysyl-[protein] + 3 S-adenosyl-L-homocysteine + 3 H(+). Its function is as follows. Methylates ribosomal protein L11. The chain is Ribosomal protein L11 methyltransferase from Dichelobacter nodosus (strain VCS1703A).